The chain runs to 345 residues: CCAAT/enhancer-binding protein beta (345 aa).

The required for Lys-174 sumoylation stretch occupies residues 1 to 24; it reads MQRLVAWDPACLPLPPPPPAFKSM. Position 3 is an asymmetric dimethylarginine; by CARM1 (Arg3). The segment at 24–135 is required for MYC transcriptional repression; sequence MEVANFYYEA…YGGKNCKKPA (112 aa). Position 43 is an N6-acetyllysine; alternate (Lys43). At Lys43 the chain carries N6-methylated lysine; alternate. Disordered regions lie at residues 46–67 and 79–116; these read PAAPPAARPGPRPPAGELGSIG and LEPLGAPQAPAPATATDTFEAAPPAPAPAPASSGQHHD. Pro residues predominate over residues 47–59; the sequence is AAPPAARPGPRPP. A compositionally biased stretch (low complexity) spans 84–100; the sequence is APQAPAPATATDTFEAA. A 9aaTAD motif is present at residues 116–124; the sequence is DFLSDLFSD. Residues Lys129 and Lys132 each carry the N6-acetyllysine; by KAT2A and KAT2B modification. Lys133 bears the N6-acetyllysine; by KAT2A and KAT2B; alternate mark. Residue Lys133 forms a Glycyl lysine isopeptide (Lys-Gly) (interchain with G-Cter in SUMO2); alternate linkage. The interval 157–178 is disordered; sequence FAPLHPPPPPPPPPAELKAEPG. Over residues 160 to 171 the composition is skewed to pro residues; sequence LHPPPPPPPPPA. Lys174 participates in a covalent cross-link: Glycyl lysine isopeptide (Lys-Gly) (interchain with G-Cter in SUMO2); alternate. A Glycyl lysine isopeptide (Lys-Gly) (interchain with G-Cter in SUMO); alternate cross-link involves residue Lys174. Glycyl lysine isopeptide (Lys-Gly) (interchain with G-Cter in SUMO2) cross-links involve residues Lys185 and Lys187. Over residues 218 to 232 the composition is skewed to low complexity; sequence SGSSGSLSTSSSSSP. Positions 218 to 271 are disordered; that stretch reads SGSSGSLSTSSSSSPPGTPSPADAKAPPTACYAGAAPAPSQVKSKAKKTVDKHS. Position 226 is a phosphothreonine; by GSK3-beta (Thr226). Residues Ser227 and Ser228 are each glycosylated (O-linked (GlcNAc) serine). Phosphoserine; by GSK3-beta is present on Ser231. Thr235 is subject to Phosphothreonine; by RPS6KA1, CDK2 and MAPK. Residues Lys260 and Lys262 each participate in a glycyl lysine isopeptide (Lys-Gly) (interchain with G-Cter in SUMO2) cross-link. At Thr266 the chain carries Phosphothreonine; by RPS6KA1 and PKC/PRKCA. Positions 271-334 constitute a bZIP domain; that stretch reads SDEYKIRRER…STLRNLFKQL (64 aa). The tract at residues 275 to 295 is basic motif; it reads KIRRERNNIAVRKSRDKAKMR. Ser288 carries the phosphoserine; by PKC/PRKCA modification. The interval 297–304 is leucine-zipper; that stretch reads LETQHKVL. Ser325 carries the phosphoserine; by CaMK2 modification. A Glycyl lysine isopeptide (Lys-Gly) (interchain with G-Cter in SUMO2) cross-link involves residue Lys332.

It belongs to the bZIP family. C/EBP subfamily. In terms of assembly, binds DNA as a homodimer and as a heterodimer. Interacts with ATF4. Binds DNA as a heterodimer with ATF4. Interacts with MYB; within the complex, MYB and CEBPB bind to different promoter regions. Can form stable heterodimers with CEBPD. Can form stable heterodimers with CEBPA and CEBPE. Interacts with SIX1. Isoform 2 and isoform 3 also form heterodimers. Interacts with TRIM28 and PTGES2. Interacts with PRDM16. Interacts with CCDC85B. Forms a complex with THOC5. Interacts with ZNF638; this interaction increases transcriptional activation. Interacts with CIDEA and CIDEC; these interactions increase transcriptional activation of a subset of CEBPB downstream target genes. Interacts with DDIT3/CHOP. Interacts with EP300; recruits EP300 to chromatin. Interacts with RORA; the interaction disrupts interaction with EP300. Interacts (not methylated) with MED23, MED26, SMARCA2, SMARCB1 and SMARCC1. Interacts with KAT2A and KAT2B. Interacts with ATF5; EP300 is required for ATF5 and CEBPB interaction and DNA binding. Interacts with NFE2L1; the heterodimer represses expression of DSPP during odontoblast differentiation. In terms of processing, methylated. Methylation at Arg-3 by CARM1 and at Lys-43 by EHMT2 inhibit transactivation activity. Methylation is probably inhibited by phosphorylation at Thr-235. Post-translationally, sumoylated by polymeric chains of SUMO2 or SUMO3. Sumoylation at Lys-174 is required for inhibition of T-cells proliferation. In adipocytes, sumoylation at Lys-174 by PIAS1 leads to ubiquitination and subsequent proteasomal degradation. Desumoylated by SENP2, which abolishes ubiquitination and stabilizes protein levels. Ubiquitinated, leading to proteasomal degradation. In terms of processing, phosphorylated at Thr-235 by MAPK and CDK2, serves to prime phosphorylation at Thr-226 and Ser-231 by GSK3B and acquire DNA-binding as well as transactivation activities, required to induce adipogenesis. MAPK and CDK2 act sequentially to maintain Thr-235 in the primed phosphorylated state during mitotical cloning expansion and thereby progression of terminal differentiation. Phosphorylation at Thr-266 enhances transactivation activity. Phosphorylation at Ser-325 in response to calcium increases transactivation activity. Phosphorylated at Thr-235 by RPS6KA1. Post-translationally, O-glycosylated, glycosylation at Ser-227 and Ser-228 prevents phosphorylation on Thr-235, Ser-231 and Thr-226 and DNA binding activity which delays the adipocyte differentiation program. Acetylated. Acetylation at Lys-43 is an important and dynamic regulatory event that contributes to its ability to transactivate target genes, including those associated with adipogenesis and adipocyte function. Deacetylation by HDAC1 represses its transactivation activity. Acetylated by KAT2A and KAT2B within a cluster of lysine residues between amino acids 129-133, this acetylation is strongly induced by glucocorticoid treatment and enhances transactivation activity. As to expression, expressed at low levels in the lung, kidney and spleen.

It localises to the nucleus. The protein localises to the cytoplasm. Its function is as follows. Important transcription factor regulating the expression of genes involved in immune and inflammatory responses. Also plays a significant role in adipogenesis, as well as in the gluconeogenic pathway, liver regeneration, and hematopoiesis. The consensus recognition site is 5'-T[TG]NNGNAA[TG]-3'. Its functional capacity is governed by protein interactions and post-translational protein modifications. During early embryogenesis, plays essential and redundant roles with CEBPA. Has a promitotic effect on many cell types such as hepatocytes and adipocytes but has an antiproliferative effect on T-cells by repressing MYC expression, facilitating differentiation along the T-helper 2 lineage. Binds to regulatory regions of several acute-phase and cytokines genes and plays a role in the regulation of acute-phase reaction and inflammation. Also plays a role in intracellular bacteria killing. During adipogenesis, is rapidly expressed and, after activation by phosphorylation, induces CEBPA and PPARG, which turn on the series of adipocyte genes that give rise to the adipocyte phenotype. The delayed transactivation of the CEBPA and PPARG genes by CEBPB appears necessary to allow mitotic clonal expansion and thereby progression of terminal differentiation. Essential for female reproduction because of a critical role in ovarian follicle development. Restricts osteoclastogenesis: together with NFE2L1; represses expression of DSPP during odontoblast differentiation. In terms of biological role, essential for gene expression induction in activated macrophages. Plays a major role in immune responses such as CD4(+) T-cell response, granuloma formation and endotoxin shock. Not essential for intracellular bacteria killing. Functionally, acts as a dominant negative through heterodimerization with isoform 2. Promotes osteoblast differentiation and osteoclastogenesis. The sequence is that of CCAAT/enhancer-binding protein beta from Homo sapiens (Human).